Here is a 2778-residue protein sequence, read N- to C-terminus: MTFDTRRHTTGQPGSTAPSSSSSTTSTTTTTTSPAQSAGSGSGIGTGTGTVANSSLPGGGSGSLDGNQDQQPATDSQSSDDVAASLSANSVDSTITIVPPEKLISSFPTTKLRSLTQKISNPRWVVPVLPEQELEVLLNAAIELTQAGVDHDCEPCVEFYRNGLSTSFAKILTDEAVNSWKNNIHHCILVSCGKLLHLIAIHMQRDNPYLLDLLAIVFDPENKFNTFNAGRQPECFAAPDYIWGQLDSNKMYARPPPEPKNARGWLVDLINRFGQLGGFDNLLERFNIGLELLKRNQNKCTGKNISVEGRVENGAQDNRLTLALIHSLLRPFGQCYELLMPATIAKYFMPTWNVVLDLLDSFTDEELKREVKPEGRNDYINGIVKSARLLASRLTGQEELIRDLEMFRLKMILRLLQVSSFNGKMNALNEINKVLSSVAYFSHRSQPLPHCMPEDEMDWLTADRMAQWIKSSDVLGVVLKDSLHQPQYVEKLEKIIRFLIKEQALTLDDLDAVWRAQAGKHEAIVKNVHDLLAKLAWDFTPEQLDHLFEAFQASMTTANKRQRERLLELIRRLAEDDKNGVMAQKVLKLFWTLAHSQEVPPEVLDQALGAHVKILDYSCSQERDAQKTIWLDKCVDELKSGDGWVLPALRLIRDICCLYDTTTNHAQRTQTSTNRQQVIERLQNDYSLVILVTNSLTAYMEKVRQMVTDSPGLDATRILIDGRFPHHVQIAERLEFLKFLLKDGQLWLCADQAKQIWHCLAVNAVFPADREECFRWFGKLMGEEPDLDPGINKDFFENNILQLDPHLLTESGIKCFERFFKAVNSKEDKLKAIHRGYMLDNEDLIGKDYLWRVITTGGEEIASKAIDLLKEVSTALGPRLQENIAEFHEMFIGECCSRLRTHYGNIVILGKTQLQEELDAPDQSDNTNDESKDSKMRFIEAEKMCRILKVLQEYVKECDRSFSGDRVHLPLSRVTRGKNTILYIRFQNPGRSIDDMEIVTHSNETMAAFKRNLLKRIKGTSTANIKVDLFYANDEMIGVSDEINPLYQYTIRDKMNLTAKLTPVGTGLASSPDSSSDSSTGSPPRPCPDMQRVESESTLPGVIISQNYQYTEFFLKLYQLGSDLEHGRLRDSAKVLLHLLPCDRQTIRQLKIMCKVPKAAVTVAVTGDKIAKDEEEKLYPTEQAGIEDEEEHCTPEQMFLHPTPAQVLYNLSVLHGLLIPALDPLGESALLVQSAWMHSGCAHFVLELLTKNNFLPSADMHTKRASFQCVLRLAKLFLYIVGSVLSRVGDEPMICDLDNGSRSQVDILKQNFSTMPSSSQGTLRAISAKLAVILAREMLSASPEGDRCRTLFSSTLQWSCPDISTIKAVVQLAWASSCGNLQALGNSSGDFEDEVIVPDGQDFSMCKEALEVLTISFILNPSANEALTSDPNWPKFITSIVLKNPLRHVRQVASEQLFLASTYCAGDRRPFVYMVNLLVGALKTLVPQYESTCAEFFSVLCRTLSYGCIYNWPLQISEGLLGDEIKWLQRIRENVHATGDTQVHEELLEGHLCLAKELMFFLGADSKAQLNELIHELIDDFLFTASREFLHLRRHGSLRQDTVPPPVCRSPHTIAAACDLLIALCQLCVPNMKLLTNTLIDFVCTDTDPLREWDYLPPVGARPTKGFCGLKNAGATCYMNSVLQQLYMVPAVRVGILRAHGAATTDGEDFSGDSDLTGGGLGSALFSGPASALVSLPSSSSTIEDGLHDVRKNYHVVILKHVQAIFAHLGHSALQYYVPRGLWTHFKLLGEPVNLREQQDAVEFFMSLLESLDEGLKALGQPQLMNATLGGSFSDQKICQECPHRYSKEEPFSVFSVDIRNHSSLTESLEQYVKGELLEGADAYHCDKCDKKVVTVKRVCVKKLPPVLAIQLKRFEYDYERVCAIKFNDYFEFPRILDMEPYTVSGLAKLEGEVVEVGDNCQTNVETTKYELTGIVVHSGQASGGHYFSYILSKNPANGKCQWYKFDDGEVTECKMHEDEEMKAECFGGEYMGETYDNNLKRMQYRRQKRWWNAYMLFYTRCDQTPVQYEPSVEQLSLAESRNMVLPLPKPIERSVRHQNIRFLHSRSIFSVEFFNFIKKLVSCNLLSARSNKITPAAEELSLLGVQLASQFLFHTGFRTKKSLRGPVMEWYDALSHHIRSSALVRKWFANHALLSPPSRLGEYILMAPSPDVRTVFVKLVVFFCHFAINDEPLTGYDGANLCEQVLISVLRLLKSEAADYGKHLPHYFSLFSMYVGLGTREKQQLLRLNVPLQFIQVALDDGPGPAIKYQYPEFSKLHQVVSHLIRCSDVSEKCQSSNQNARPLSNPFKDPNVAHEELTPLSTECMDLLFNRTGYIKKVIEDTNVGDEGLKLLQYCSWENPHFSRAVLTELLWQCGFAYCHDMRHHTDLLLNILLIDDSWQHHRIHNALNGVAEEREGLLETIQRAKTHYQKRAYQIIKCLTQLFHKSPIALQMLHTNSNITRHWSIAVEWLQGELDRQRGIGCQYNSYSWSPPAQSNDNTNGYMLERSQSAKNTWSMAFELCPDEVSEKTDENNEPNLETNMDENKSEPVAQPGGVLEGSTGGTEQLPENKTPTTSSPSTAAWPARGDSNAIPRLSRQLFGAYTSTGSGSTSGGSAPTSALTTTAGSGANSETESSAQETTGETTINGLTNSLDQMEITAKKKCRRVIIKKLVESKDEEDATTATTAATTEVTTSPATAIATAATLEPAGMSELTTMVEKNLIISQENPQAKSSLQ.

Positions 1–85 (MTFDTRRHTT…SQSSDDVAAS (85 aa)) are disordered. Residues 10–39 (TGQPGSTAPSSSSSTTSTTTTTTSPAQSAG) are compositionally biased toward low complexity. Residues 71–85 (QPATDSQSSDDVAAS) show a composition bias toward polar residues. The residue at position 924 (Ser924) is a Phosphoserine. Positions 1065–1094 (GTGLASSPDSSSDSSTGSPPRPCPDMQRVE) are disordered. Positions 1070–1082 (SSPDSSSDSSTGS) are enriched in low complexity. One can recognise a USP domain in the interval 1668–2062 (CGLKNAGATC…NAYMLFYTRC (395 aa)). Residue Cys1677 is the Nucleophile of the active site. Catalysis depends on His1986, which acts as the Proton acceptor. Disordered regions lie at residues 2568 to 2632 (VSEK…GDSN) and 2644 to 2691 (AYTS…INGL). Low complexity-rich tracts occupy residues 2614–2627 (TPTT…AWPA) and 2644–2671 (AYTS…GSGA). Positions 2672 to 2691 (NSETESSAQETTGETTINGL) are enriched in polar residues.

The protein belongs to the peptidase C19 family. In terms of assembly, interacts with imd. In terms of processing, ubiquitinated. Ubiquitination is enhanced by the expression of imd. Eye disks and ovaries. Expressed in larval fat body.

It catalyses the reaction Thiol-dependent hydrolysis of ester, thioester, amide, peptide and isopeptide bonds formed by the C-terminal Gly of ubiquitin (a 76-residue protein attached to proteins as an intracellular targeting signal).. Its function is as follows. Ubiquitin C-terminal hydrolase involved in development and the imd/NF-kappa-B (IMD) signaling cascade. Required for eye and embryo development, and plays a role in compound eye assembly and oogenesis respectively. In the larval eye disks, cells outside the assembling facets require this protein for short-range cell interactions that prevent the mystery cells from becoming photoreceptors. Also required for nuclear migration and cellularization in early embryogenesis and could play a role in pole cell determination, development or function. Regulates the IMD signaling cascade at later stages of infection (around 6 hours post-infection) by inhibiting the expression of the antimicrobial peptides Dpt and Dro. Acts by modulating the state of imd polyubiquitination and/or stability; a function which appears to be independent of its enzymatic activity. In turn, imd enhances the polyubiquitination and stability of faf suggesting that they may form a regulatory feedback mechanism within the Imd pathway. The protein is Probable ubiquitin carboxyl-terminal hydrolase FAF (faf) of Drosophila melanogaster (Fruit fly).